A 385-amino-acid chain; its full sequence is 8-amino-7-oxononanoate synthase (385 aa).

Arginine 21 contacts substrate. Position 108-109 (glycine 108–phenylalanine 109) interacts with pyridoxal 5'-phosphate. A substrate-binding site is contributed by histidine 133. Serine 179, histidine 207, and threonine 233 together coordinate pyridoxal 5'-phosphate. The residue at position 236 (lysine 236) is an N6-(pyridoxal phosphate)lysine. Residue threonine 352 coordinates substrate.

This sequence belongs to the class-II pyridoxal-phosphate-dependent aminotransferase family. BioF subfamily. In terms of assembly, homodimer. It depends on pyridoxal 5'-phosphate as a cofactor.

The enzyme catalyses 6-carboxyhexanoyl-[ACP] + L-alanine + H(+) = (8S)-8-amino-7-oxononanoate + holo-[ACP] + CO2. It functions in the pathway cofactor biosynthesis; biotin biosynthesis. Its function is as follows. Catalyzes the decarboxylative condensation of pimeloyl-[acyl-carrier protein] and L-alanine to produce 8-amino-7-oxononanoate (AON), [acyl-carrier protein], and carbon dioxide. The polypeptide is 8-amino-7-oxononanoate synthase (Klebsiella pneumoniae (strain 342)).